Reading from the N-terminus, the 227-residue chain is PKHD-type hydroxylase A1S_0473 (227 aa).

Residues 78–178 (KIIPPLFNRY…RFASFFWVQS (101 aa)) enclose the Fe2OG dioxygenase domain. Fe cation-binding residues include His-96, Asp-98, and His-159. Residue Arg-169 coordinates 2-oxoglutarate.

Fe(2+) is required as a cofactor. Requires L-ascorbate as cofactor.

The polypeptide is PKHD-type hydroxylase A1S_0473 (Acinetobacter baumannii (strain ATCC 17978 / DSM 105126 / CIP 53.77 / LMG 1025 / NCDC KC755 / 5377)).